Here is a 469-residue protein sequence, read N- to C-terminus: Glutamate--tRNA ligase (469 aa).

The 'HIGH' region signature appears at 11 to 21 (PSPTGFIHLGN). The 'KMSKS' region motif lies at 243 to 247 (KMSKR). Lysine 246 is an ATP binding site.

Belongs to the class-I aminoacyl-tRNA synthetase family. Glutamate--tRNA ligase type 1 subfamily. Monomer.

The protein resides in the cytoplasm. It catalyses the reaction tRNA(Glu) + L-glutamate + ATP = L-glutamyl-tRNA(Glu) + AMP + diphosphate. Catalyzes the attachment of glutamate to tRNA(Glu) in a two-step reaction: glutamate is first activated by ATP to form Glu-AMP and then transferred to the acceptor end of tRNA(Glu). This is Glutamate--tRNA ligase from Burkholderia cenocepacia (strain HI2424).